The primary structure comprises 190 residues: DNA-binding transcriptional repressor TetR (190 aa).

Residues 6 to 66 enclose the HTH tetR-type domain; sequence ETRSAALLAV…AALDAHDASF (61 aa). Positions 29–48 form a DNA-binding region, H-T-H motif; that stretch reads SMDSVAALAHASKTTIYRRW.

Homodimer.

Functionally, binds to its own palindromic promoter and represses transcription of its operon; addition of tetracycline or doxycycline (but not tigecycline) interferes with DNA binding. Addition of TetX to the DNA-TetR-antibiotic complex restores DNA binding. This chain is DNA-binding transcriptional repressor TetR, found in Mycobacteroides abscessus (strain ATCC 19977 / DSM 44196 / CCUG 20993 / CIP 104536 / JCM 13569 / NCTC 13031 / TMC 1543 / L948) (Mycobacterium abscessus).